The sequence spans 486 residues: Betaine aldehyde dehydrogenase (486 aa).

Residues Thr23 and Asp90 each coordinate K(+). An NAD(+)-binding site is contributed by 147–149 (GAW). The active-site Charge relay system is the Lys159. Residues 173–176 (KPSE) and 226–229 (ESGT) each bind NAD(+). Leu241 is a K(+) binding site. Glu247 acts as the Proton acceptor in catalysis. Gly249, Cys281, and Glu382 together coordinate NAD(+). The active-site Nucleophile is Cys281. Cys281 is subject to Cysteine sulfenic acid (-SOH). Positions 452 and 455 each coordinate K(+). Glu459 (charge relay system) is an active-site residue.

The protein belongs to the aldehyde dehydrogenase family. In terms of assembly, dimer of dimers. The cofactor is K(+).

It carries out the reaction betaine aldehyde + NAD(+) + H2O = glycine betaine + NADH + 2 H(+). The protein operates within amine and polyamine biosynthesis; betaine biosynthesis via choline pathway; betaine from betaine aldehyde: step 1/1. In terms of biological role, involved in the biosynthesis of the osmoprotectant glycine betaine. Catalyzes the irreversible oxidation of betaine aldehyde to the corresponding acid. This chain is Betaine aldehyde dehydrogenase, found in Vibrio parahaemolyticus serotype O3:K6 (strain RIMD 2210633).